The chain runs to 96 residues: UPF0235 protein Shewmr4_1190 (96 aa).

This sequence belongs to the UPF0235 family.

In Shewanella sp. (strain MR-4), this protein is UPF0235 protein Shewmr4_1190.